The following is a 407-amino-acid chain: Putative glycosyltransferase YtcC (407 aa).

This sequence belongs to the glycosyltransferase group 1 family. Glycosyltransferase 4 subfamily.

In Bacillus subtilis (strain 168), this protein is Putative glycosyltransferase YtcC (ytcC).